A 575-amino-acid chain; its full sequence is Phosphoenolpyruvate-protein phosphotransferase (575 aa).

The Tele-phosphohistidine intermediate role is filled by H189. Residues R296 and R332 each contribute to the phosphoenolpyruvate site. The Mg(2+) site is built by E431 and D455. Phosphoenolpyruvate-binding positions include 454–455 (ND) and R465. Catalysis depends on C502, which acts as the Proton donor.

Belongs to the PEP-utilizing enzyme family. Homodimer. The cofactor is Mg(2+).

It is found in the cytoplasm. It carries out the reaction L-histidyl-[protein] + phosphoenolpyruvate = N(pros)-phospho-L-histidyl-[protein] + pyruvate. Functionally, general (non sugar-specific) component of the phosphoenolpyruvate-dependent sugar phosphotransferase system (sugar PTS). This major carbohydrate active-transport system catalyzes the phosphorylation of incoming sugar substrates concomitantly with their translocation across the cell membrane. Enzyme I transfers the phosphoryl group from phosphoenolpyruvate (PEP) to the phosphoryl carrier protein (HPr). This chain is Phosphoenolpyruvate-protein phosphotransferase (ptsI), found in Salmonella typhimurium (strain LT2 / SGSC1412 / ATCC 700720).